A 328-amino-acid polypeptide reads, in one-letter code: MLEHGVMKIPGINNVGKTGQAGGETERIPSTEPLGSSAATSPAGPLGGLPARSSSISNTNRTGENPMITPIISSNLGLKHRVTLRKATLASLMQSLSGESSNRVMWNDRYDTLLIARDPREIKNAIEKSVTDFGGLENYKELTGGADPFALMTPVCGLSANNIFKLMTEKDVPIDPTSIEYLENTSFAEHVNTLDSHKNYVVIVNDGRLGHKFLIDLPALTQGPRTAYIIQSDLGGGALPAVRVEDWISRRGSDPVSLDELNQLLSKDFSKMPDDVQTRLLASILQIDKDPHKVDIKKLHLDGKLRFASHEYDFRQFQRNAQYVAGLG.

Residues 1–68 (MLEHGVMKIP…TNRTGENPMI (68 aa)) are disordered. Polar residues predominate over residues 52 to 63 (RSSSISNTNRTG). Residues Cys-156, His-211, and Gln-231 contribute to the active site.

The protein belongs to the Cif family.

It is found in the secreted. It localises to the host nucleus. It carries out the reaction L-glutaminyl-[protein] + H2O = L-glutamyl-[protein] + NH4(+). Protein-glutamine deamidase effector that inhibits the host cell cycle and other key cellular processes such as the actin network and programmed-cell death. Acts by mediating the side chain deamidation of 'Gln-40' of host NEDD8, converting it to glutamate, thereby abolishing the activity of cullin-RING-based E3 ubiquitin-protein ligase complexes (CRL complexes). Inactivation of CRL complexes prevents ubiquitination and subsequent degradation of the cyclin-dependent kinase inhibitors CDKN1A/p21 and CDKN1B/p27, leading to G1 and G2 cell cycle arrests in host cells. Deamidation of 'Gln-40' of host NEDD8 also triggers macrophage-specific programmed cell death. Also able to catalyze deamidation of 'Gln-40' of host ubiquitin in vitro; however, NEDD8 constitutes the preferred substrate in vivo. Also regulates the host NF-kappa-B signaling via activation of MAPK/ERK cascade: activation of host MAPK/ERK cascade is independent of CRL complexes inhibition, suggesting that Cif has other host protein targets than NEDD8. The sequence is that of Protein-glutamine deamidase Cif from Burkholderia pseudomallei (strain K96243).